The chain runs to 284 residues: Release factor glutamine methyltransferase (284 aa).

S-adenosyl-L-methionine is bound by residues 121–125 (GTGTG), Asp144, Trp172, and Asn188. 188–191 (NPPY) lines the substrate pocket.

The protein belongs to the protein N5-glutamine methyltransferase family. PrmC subfamily.

The enzyme catalyses L-glutaminyl-[peptide chain release factor] + S-adenosyl-L-methionine = N(5)-methyl-L-glutaminyl-[peptide chain release factor] + S-adenosyl-L-homocysteine + H(+). In terms of biological role, methylates the class 1 translation termination release factors RF1/PrfA and RF2/PrfB on the glutamine residue of the universally conserved GGQ motif. This Aliivibrio fischeri (strain ATCC 700601 / ES114) (Vibrio fischeri) protein is Release factor glutamine methyltransferase.